The following is a 564-amino-acid chain: Sulfite reductase [NADPH] hemoprotein beta-component 1 (564 aa).

[4Fe-4S] cluster is bound by residues C426, C432, C471, and C475. Residue C475 participates in siroheme binding.

This sequence belongs to the nitrite and sulfite reductase 4Fe-4S domain family. In terms of assembly, alpha(8)-beta(8). The alpha component is a flavoprotein, the beta component is a hemoprotein. Siroheme is required as a cofactor. Requires [4Fe-4S] cluster as cofactor.

The catalysed reaction is hydrogen sulfide + 3 NADP(+) + 3 H2O = sulfite + 3 NADPH + 4 H(+). It functions in the pathway sulfur metabolism; hydrogen sulfide biosynthesis; hydrogen sulfide from sulfite (NADPH route): step 1/1. Its function is as follows. Component of the sulfite reductase complex that catalyzes the 6-electron reduction of sulfite to sulfide. This is one of several activities required for the biosynthesis of L-cysteine from sulfate. This Pectobacterium carotovorum subsp. carotovorum (strain PC1) protein is Sulfite reductase [NADPH] hemoprotein beta-component 1.